Reading from the N-terminus, the 251-residue chain is MSDANNTAGDANEVNPEKDLSAENLPGQRGQGGEEIRVQRGMFGANNGGDTSGYGGLVRSVRLPGPASRPYGGWFDEVADELEGALEEQGLLPDNAIEKTVVDRGELTFHIEREHLVRVARTLRDDPALRFELCTGVSGVHYPHDKGRELHAVYHLRSITHNRLIRLEVSAPDGDPHIPSLVSVYPTNDWHERETYDFFGIVFDDHPALTRIMMPDDWQGFPQRKDYPLGGIPVEYKGAQIPAPDQRRSYS.

The segment at 1-34 (MSDANNTAGDANEVNPEKDLSAENLPGQRGQGGE) is disordered.

Belongs to the complex I 30 kDa subunit family. In terms of assembly, NDH-1 is composed of 14 different subunits. Subunits NuoB, C, D, E, F, and G constitute the peripheral sector of the complex.

The protein resides in the cell membrane. The catalysed reaction is a quinone + NADH + 5 H(+)(in) = a quinol + NAD(+) + 4 H(+)(out). In terms of biological role, NDH-1 shuttles electrons from NADH, via FMN and iron-sulfur (Fe-S) centers, to quinones in the respiratory chain. The immediate electron acceptor for the enzyme in this species is believed to be a menaquinone. Couples the redox reaction to proton translocation (for every two electrons transferred, four hydrogen ions are translocated across the cytoplasmic membrane), and thus conserves the redox energy in a proton gradient. The protein is NADH-quinone oxidoreductase subunit C of Streptomyces coelicolor (strain ATCC BAA-471 / A3(2) / M145).